Reading from the N-terminus, the 41-residue chain is Photosystem I reaction center subunit VIII (41 aa).

The chain crosses the membrane as a helical span at residues 12–32; the sequence is WIMIPVTCWLFPVVVMGLLFI.

The protein belongs to the PsaI family.

The protein resides in the cellular thylakoid membrane. In terms of biological role, may help in the organization of the PsaL subunit. In Cyanothece sp. (strain PCC 7425 / ATCC 29141), this protein is Photosystem I reaction center subunit VIII.